The following is a 424-amino-acid chain: Histidinol dehydrogenase (424 aa).

Tyr-127, Gln-188, and Asn-211 together coordinate NAD(+). Residues Ser-234, Gln-256, and His-259 each contribute to the substrate site. Zn(2+) is bound by residues Gln-256 and His-259. Active-site proton acceptor residues include Glu-322 and His-323. Positions 323, 356, 410, and 415 each coordinate substrate. Asp-356 provides a ligand contact to Zn(2+). His-415 is a Zn(2+) binding site.

The protein belongs to the histidinol dehydrogenase family. Requires Zn(2+) as cofactor.

It catalyses the reaction L-histidinol + 2 NAD(+) + H2O = L-histidine + 2 NADH + 3 H(+). The protein operates within amino-acid biosynthesis; L-histidine biosynthesis; L-histidine from 5-phospho-alpha-D-ribose 1-diphosphate: step 9/9. Functionally, catalyzes the sequential NAD-dependent oxidations of L-histidinol to L-histidinaldehyde and then to L-histidine. This Methanococcus maripaludis (strain DSM 14266 / JCM 13030 / NBRC 101832 / S2 / LL) protein is Histidinol dehydrogenase.